Reading from the N-terminus, the 521-residue chain is Probable feruloyl esterase B (521 aa).

The signal sequence occupies residues 1–17; that stretch reads MKVSSLLSVALPGAALA. Disulfide bonds link Cys-26/Cys-72 and Cys-61/Cys-111. Asn-37, Asn-51, Asn-77, Asn-95, Asn-144, and Asn-177 each carry an N-linked (GlcNAc...) asparagine glycan. 3 disulfide bridges follow: Cys-184–Cys-438, Cys-253–Cys-270, and Cys-279–Cys-288. Ser-185 acts as the Acyl-ester intermediate in catalysis. 5 residues coordinate Ca(2+): Asp-254, Asp-257, Ala-259, Asp-261, and Ile-263. 4 N-linked (GlcNAc...) asparagine glycosylation sites follow: Asn-284, Asn-347, Asn-352, and Asn-378. Catalysis depends on charge relay system residues Asp-397 and His-437. Asn-488 and Asn-511 each carry an N-linked (GlcNAc...) asparagine glycan. Cys-498 and Cys-520 are disulfide-bonded.

It belongs to the tannase family.

Its subcellular location is the secreted. It carries out the reaction feruloyl-polysaccharide + H2O = ferulate + polysaccharide.. Involved in degradation of plant cell walls. Hydrolyzes the feruloyl-arabinose ester bond in arabinoxylans as well as the feruloyl-galactose and feruloyl-arabinose ester bonds in pectin. The protein is Probable feruloyl esterase B (faeB) of Aspergillus niger (strain ATCC MYA-4892 / CBS 513.88 / FGSC A1513).